Reading from the N-terminus, the 515-residue chain is UPF0053 protein BUsg_314 (515 aa).

The next 7 membrane-spanning stretches (helical) occupy residues 14–34 (LTLV…VAIL), 49–69 (IGLG…SWVV), 79–99 (NFFS…FLLF), 125–145 (FWAV…DAII), 150–170 (MVNQ…LMLL), 185–205 (VVVL…AEAL), and 207–227 (FYIP…IEIF). CBS domains lie at 309–368 (MTPR…NIDV) and 372–432 (ASQI…DADE).

This sequence belongs to the UPF0053 family.

The protein localises to the cell membrane. This Buchnera aphidicola subsp. Schizaphis graminum (strain Sg) protein is UPF0053 protein BUsg_314.